A 49-amino-acid polypeptide reads, in one-letter code: U6-myrmicitoxin-Mri1a (49 aa).

The N-terminal stretch at 1 to 27 (MNPKALCSFLLATFLLLTVTIMPSVHA) is a signal peptide. Positions 28–35 (NAEANADA) are excised as a propeptide.

In terms of processing, contains 1 disulfide bond. As to expression, expressed by the venom gland.

The protein localises to the secreted. In Manica rubida (European giant red ant), this protein is U6-myrmicitoxin-Mri1a.